Consider the following 1388-residue polypeptide: DNA-directed RNA polymerase subunit beta (1388 aa).

It belongs to the RNA polymerase beta chain family. The RNAP catalytic core consists of 2 alpha, 1 beta, 1 beta' and 1 omega subunit. When a sigma factor is associated with the core the holoenzyme is formed, which can initiate transcription.

The enzyme catalyses RNA(n) + a ribonucleoside 5'-triphosphate = RNA(n+1) + diphosphate. Functionally, DNA-dependent RNA polymerase catalyzes the transcription of DNA into RNA using the four ribonucleoside triphosphates as substrates. This Xylella fastidiosa (strain Temecula1 / ATCC 700964) protein is DNA-directed RNA polymerase subunit beta.